The chain runs to 491 residues: Cysteine--tRNA ligase (491 aa).

Cysteine 31 is a binding site for Zn(2+). The short motif at 33-43 (PTVYGDAHLGH) is the 'HIGH' region element. 3 residues coordinate Zn(2+): cysteine 226, histidine 251, and glutamate 255. The 'KMSKS' region signature appears at 283-287 (KMGKS). Lysine 286 is an ATP binding site.

The protein belongs to the class-I aminoacyl-tRNA synthetase family. Monomer. Zn(2+) serves as cofactor.

Its subcellular location is the cytoplasm. The catalysed reaction is tRNA(Cys) + L-cysteine + ATP = L-cysteinyl-tRNA(Cys) + AMP + diphosphate. This Parabacteroides distasonis (strain ATCC 8503 / DSM 20701 / CIP 104284 / JCM 5825 / NCTC 11152) protein is Cysteine--tRNA ligase.